The sequence spans 680 residues: MSNTRKILITSALPYANGPIHLGHLVEYIQTDIWARFQKMRGHECYYVCADDAHGTPIMLRAQAEGIDPEDLIARISEEHQTDFAGFNINFDFYHSTNSPENKHFASYIYTQLKEQNHISRKTIKQFYDPEKKMFLPDRFIKGTCPKCKTDDQYGDNCEACGATYSPTDLLNPKSAVSGATPIEKETDHLFFELSHFEDMLKEWTHQGHLQTQIANKLDEWFESGLRAWDISRDAPYFGFEIPGEKDKFFYVWLDAPVGYMASFKALCDKTGLDFDEFWKADSTTELYHFIGKDIIYFHALFWPAMLSGAGFRTPNAIFSHGFLTVDGQKMSKSRGTFIMAKTYLDHLNPEYLRYYFAAKLNSRIDDIDLSLEDFAQRVNSDLVGKVVNIASRCAGFVSKKFDGKLSQAWSDSASTLYQSFIDKSETIANLYEQREYAQAMREIMALADKANEYIDETAPWVLAKQEGKEAELYESVSLGINLFRVLITYLAPVIPTTAEKAQAFLQVDTLNWTDINTPLKDHEITKFKALMTRVEIESIEKMTDASKQDMKKMPPMKPEIKEEASNLDPIADEITFDDFAKVDFRIAKIVNAEQVPEADKLIKLTLDIGVGERQVFAGIKSAYKPEDLVGKLTVMVANLKPRKMRFGLSEGMVLAAGPGGKDLFLLNPDDGAQPGMRVK.

The 'HIGH' region signature appears at 14–24 (PYANGPIHLGH). Zn(2+)-binding residues include Cys-145, Cys-148, Cys-158, and Cys-161. The 'KMSKS' region motif lies at 330 to 334 (KMSKS). Lys-333 lines the ATP pocket. In terms of domain architecture, tRNA-binding spans 579–680 (DFAKVDFRIA…DGAQPGMRVK (102 aa)).

The protein belongs to the class-I aminoacyl-tRNA synthetase family. MetG type 1 subfamily. As to quaternary structure, homodimer. Zn(2+) serves as cofactor.

The protein localises to the cytoplasm. It catalyses the reaction tRNA(Met) + L-methionine + ATP = L-methionyl-tRNA(Met) + AMP + diphosphate. Is required not only for elongation of protein synthesis but also for the initiation of all mRNA translation through initiator tRNA(fMet) aminoacylation. The protein is Methionine--tRNA ligase of Hydrogenovibrio crunogenus (strain DSM 25203 / XCL-2) (Thiomicrospira crunogena).